Reading from the N-terminus, the 489-residue chain is Cysteine--tRNA ligase (489 aa).

Cys29 lines the Zn(2+) pocket. The 'HIGH' region signature appears at 31–41 (VTVYDYCHLGH). Cys215, His240, and Glu244 together coordinate Zn(2+). The 'KMSKS' region signature appears at 272–276 (KMSKS). Lys275 serves as a coordination point for ATP.

This sequence belongs to the class-I aminoacyl-tRNA synthetase family. In terms of assembly, monomer. Zn(2+) is required as a cofactor.

Its subcellular location is the cytoplasm. It carries out the reaction tRNA(Cys) + L-cysteine + ATP = L-cysteinyl-tRNA(Cys) + AMP + diphosphate. This is Cysteine--tRNA ligase from Trichodesmium erythraeum (strain IMS101).